We begin with the raw amino-acid sequence, 135 residues long: Large ribosomal subunit protein bL17 (135 aa).

Belongs to the bacterial ribosomal protein bL17 family. As to quaternary structure, part of the 50S ribosomal subunit. Contacts protein L32.

This is Large ribosomal subunit protein bL17 from Listeria innocua serovar 6a (strain ATCC BAA-680 / CLIP 11262).